The sequence spans 220 residues: Artemin (220 aa).

Residues 1-39 (MELGLGGLSTLSHCPWPRQQPALWPTLAALALLSSVAEA) form the signal peptide. The propeptide occupies 40–107 (SLGSAPRSPA…ALPRGGRAAR (68 aa)). The disordered stretch occupies residues 41 to 121 (LGSAPRSPAP…GSRARAAGAR (81 aa)). Pro residues-rich tracts occupy residues 47 to 58 (SPAPREGPPPVL) and 81 to 98 (PPPQ…PPSA). Residues 99–121 (LPRGGRAARAGGPGSRARAAGAR) are compositionally biased toward low complexity. 3 disulfide bridges follow: Cys-123–Cys-188, Cys-150–Cys-216, and Cys-154–Cys-218. N-linked (GlcNAc...) asparagine glycosylation occurs at Asn-202.

It belongs to the TGF-beta family. GDNF subfamily. As to quaternary structure, homodimer; disulfide-linked. Interacts with GFRA3 coreceptor and RET: forms a 2:2:2 ternary complex composed of ARTN ligand, GFRA3 and RET receptor. Ubiquitous. Expressed at high levels in peripheral tissues including prostate, placenta, pancreas, heart, kidney, pituitary gland, lung and testis. Expressed at low levels in the brain.

It localises to the secreted. Its function is as follows. Growth factor that supports the survival of sensory and sympathetic peripheral neurons in culture and also supports the survival of dopaminergic neurons of the ventral mid-brain. Acts by binding to its coreceptor, GFRA3, leading to autophosphorylation and activation of the RET receptor. Strong attractant of gut hematopoietic cells thus promoting the formation Peyer's patch-like structures, a major component of the gut-associated lymphoid tissue. The polypeptide is Artemin (Homo sapiens (Human)).